Reading from the N-terminus, the 285-residue chain is Pantothenate synthetase (285 aa).

30-37 contacts ATP; sequence MGFLHEGH. The Proton donor role is filled by His37. Gln61 is a (R)-pantoate binding site. A beta-alanine-binding site is contributed by Gln61. 147 to 150 lines the ATP pocket; it reads GQKD. Position 153 (Gln153) interacts with (R)-pantoate. ATP is bound by residues Val176 and 184 to 187; that span reads KSSR.

Belongs to the pantothenate synthetase family. As to quaternary structure, homodimer.

The protein resides in the cytoplasm. The enzyme catalyses (R)-pantoate + beta-alanine + ATP = (R)-pantothenate + AMP + diphosphate + H(+). Its pathway is cofactor biosynthesis; (R)-pantothenate biosynthesis; (R)-pantothenate from (R)-pantoate and beta-alanine: step 1/1. Functionally, catalyzes the condensation of pantoate with beta-alanine in an ATP-dependent reaction via a pantoyl-adenylate intermediate. This is Pantothenate synthetase from Listeria monocytogenes serovar 1/2a (strain ATCC BAA-679 / EGD-e).